The primary structure comprises 2280 residues: Genome polyprotein (2280 aa).

One can recognise an SF3 helicase domain in the interval 454-608 (ETQANNIRST…EEWKKRNPGK (155 aa)). 480 to 487 (GAPGIGKT) lines the ATP pocket. At Y965 the chain carries O-(5'-phospho-RNA)-tyrosine. A Peptidase C24 domain is found at 1054–1202 (APTAIVEFTQ…TKVAQRVVKE (149 aa)). Residues H1084, E1105, and C1169 each act as for 3CLpro activity in the active site. The region spanning 1442-1567 (GVLYCLDYSK…SVCPATASIF (126 aa)) is the RdRp catalytic domain. Positions 1722-1746 (GNGSNPEPKQSNNPMVVDPPGTTGP) are disordered. Polar residues predominate over residues 1723-1735 (NGSNPEPKQSNNP).

As to quaternary structure, homodimer. Homomultimer. Post-translationally, specific enzymatic cleavages in vivo yield mature proteins. Pro-Pol is first autocatalytically cleaved, then processes the whole polyprotein. In terms of processing, VPg is uridylylated by the polymerase and is covalently attached to the 5'-end of the polyadenylated genomic and subgenomic RNAs. This uridylylated form acts as a nucleotide-peptide primer for the polymerase.

The protein localises to the virion. The protein resides in the host cytoplasm. The enzyme catalyses a ribonucleoside 5'-triphosphate + H2O = a ribonucleoside 5'-diphosphate + phosphate + H(+). It carries out the reaction RNA(n) + a ribonucleoside 5'-triphosphate = RNA(n+1) + diphosphate. It catalyses the reaction Endopeptidase with a preference for cleavage when the P1 position is occupied by Glu-|-Xaa and the P1' position is occupied by Gly-|-Yaa.. Functionally, together with NTPase and NS4, initiates the formation of the replication complex. Induces the proliferation of the host smooth ER membranes forming long tubular structures. These remodeled membranes probably form the viral factories that contain the replication complex. In terms of biological role, displays NTPase activity, but no helicase activity. Induces the formation of convoluted membranes derived from the host ER. These remodeled membranes probably form the viral factories that contain the replication complex. Together with NS2 and NS4, initiates the formation of the replication complex. Probable key protein responsible for the formation of membrane alterations by the virus. Induces the formation of convoluted membranes derived from the host ER. These remodeled membranes probably form the viral factories that contain the replication complex. Together with NS2 and NTPase, initiates the formation of the replication complex. Its function is as follows. Viral genome-linked protein is covalently linked to the 5'-end of the positive-strand, negative-strand genomic RNAs and subgenomic RNA. Acts as a genome-linked replication primer. May recruit ribosome to viral RNA thereby promoting viral proteins translation. Interacts with host translation initiation complex to allow the translation of viral proteins. Functionally, protease-polymerase p76 processes the polyprotein: Pro-Pol is first released by autocleavage, then all other proteins are cleaved. Cleaves host translation initiation factor eIF4G1, eIF4G2 and PABP1 thereby inducing a shutdown of host protein synthesis. This shutdown may not prevent viral mRNA from being translated since viral Vpg replaces the cap. It is also an RNA-directed RNA polymerase which replicates genomic and antigenomic viral RNA by recognizing specific signals. Also transcribes a subgenomic mRNA by initiating RNA synthesis internally on antigenomic RNA. This sgRNA codes for structural proteins. Catalyzes the covalent attachment VPg with viral RNAs. In terms of biological role, capsid protein self assembles to form an icosahedral capsid with a T=3 symmetry, about 38 nm in diameter, and consisting of 180 capsid proteins. The capsid encapsulate the genomic RNA and VP2 proteins. Attaches virion to target cells, inducing endocytosis of the viral particle. Acidification of the endosome induces conformational change of capsid protein thereby injecting virus genomic RNA into host cytoplasm. In Sapporo virus (isolate GI/Human/Germany/pJG-Sap01) (Hu/Dresden/pJG-Sap01/DE), this protein is Genome polyprotein.